Consider the following 555-residue polypeptide: Myo-inositol transporter 2 (555 aa).

Topologically, residues 1–61 (MSSTLDTITP…NLVRAENEDK (61 aa)) are cytoplasmic. Residues 62-82 (VTPYFMFLISVAAIAGFLFGY) form a helical membrane-spanning segment. Residues 83-108 (DTGIVGAALPMVGTSLGHTLSATESE) lie on the Extracellular side of the membrane. Residues 109–129 (IITAGTTIGAIFGASILGTMA) traverse the membrane as a helical segment. Over 130–142 (DKLGRKWAMIISD) the chain is Cytoplasmic. A helical membrane pass occupies residues 143 to 163 (FAFTAGAIIIAASYSVPQIIV). At 164-165 (GR) the chain is on the extracellular side. The chain crosses the membrane as a helical span at residues 166-186 (LVLGVGVGGAAVIAPLYIAEL). Over 187 to 200 (APTAVRGRCVGANA) the chain is Cytoplasmic. Residues 201 to 221 (FCIPFGQVVASAIGAGFQAGV) form a helical membrane-spanning segment. Residues 222-228 (PYHIGWR) lie on the Extracellular side of the membrane. The helical transmembrane segment at 229–249 (VLFGLGVVPSVVQLCLMHFLP) threads the bilayer. Over 250-328 (ESPRVLVLRG…AIISVSGVQA (79 aa)) the chain is Cytoplasmic. The helical transmembrane segment at 329 to 349 (FGQLTGFNTLLYYSGTIFGLL) threads the bilayer. The Extracellular portion of the chain corresponds to 350-355 (GLKNGA). A helical membrane pass occupies residues 356–376 (AAGLIPSCLNALFVFIGMSIV). Residues 377–385 (DKVGRRKLM) are Cytoplasmic-facing. A helical membrane pass occupies residues 386 to 406 (ITFIPGMMIAFTWTIISFHFL). The Extracellular segment spans residues 407–427 (TKPTGGLLLKDYQYSTPLVGS). Residues 428–448 (VLGSIVLFVIPFGLTYSHIIW) form a helical membrane-spanning segment. The Cytoplasmic portion of the chain corresponds to 449–461 (YQSEFLPLEIRAA). Residues 462 to 482 (GSAISTTACWLANLVVSVAYL) traverse the membrane as a helical segment. Topologically, residues 483-487 (TQLEK) are extracellular. The helical transmembrane segment at 488–508 (LGATGTYGLYLGFITIGYIFV) threads the bilayer. Residues 509–555 (YFCYPETKGLSIDETAEIFIDGFGIEKAHQMLREKRAFAAELYAGRA) are Cytoplasmic-facing.

Belongs to the major facilitator superfamily. Sugar transporter (TC 2.A.1.1) family.

It localises to the cell membrane. It catalyses the reaction myo-inositol(out) + H(+)(out) = myo-inositol(in) + H(+)(in). In terms of biological role, transporter for myo-inositol. This is Myo-inositol transporter 2 from Cryptococcus neoformans var. grubii serotype A (strain H99 / ATCC 208821 / CBS 10515 / FGSC 9487) (Filobasidiella neoformans var. grubii).